The following is a 180-amino-acid chain: CASP-like protein 2D1 (180 aa).

The Cytoplasmic segment spans residues 1 to 7 (MAASGLK). The helical transmembrane segment at 8–28 (VPEMALRVCVVPLALASLWEM) threads the bilayer. Over 29–48 (ATNAQADDTYGEVKFSDLSG) the chain is Extracellular. A helical membrane pass occupies residues 49-69 (FSYLVGVNAVTAAYALVSILL). Topologically, residues 70-79 (SSLKPLARYD) are cytoplasmic. The helical transmembrane segment at 80 to 100 (WVILVMDQASAYLLVTSASAA) threads the bilayer. Residues 101 to 129 (AELLQLARRGDREVSWGEVCSYFGRFCGK) lie on the Extracellular side of the membrane. Residues 130 to 150 (ATVSLALHAAALACFVALALV) traverse the membrane as a helical segment. The Cytoplasmic segment spans residues 151–180 (SAFRVLSTTGSSCHPPKHAQAQEHEQGRYN). The tract at residues 161 to 180 (SSCHPPKHAQAQEHEQGRYN) is disordered. The span at 170 to 180 (QAQEHEQGRYN) shows a compositional bias: basic and acidic residues.

Belongs to the Casparian strip membrane proteins (CASP) family. In terms of assembly, homodimer and heterodimers.

The protein resides in the cell membrane. The protein is CASP-like protein 2D1 of Sorghum bicolor (Sorghum).